The sequence spans 343 residues: Pseudaminic acid synthase (343 aa).

In terms of domain architecture, AFP-like spans 287–343 (SLYASKDIKKGEMFSEENVKSVRPSFGLHPKFYQELLGKKASKDIKFGDALKQGDFQ).

This sequence belongs to the pseudaminic acid synthase family. A divalent metal cation serves as cofactor.

The catalysed reaction is 2,4-diacetamido-2,4,6-trideoxy-beta-L-altrose + phosphoenolpyruvate + H2O = pseudaminate + phosphate. Its function is as follows. Catalyzes the fifth step in the biosynthesis of pseudaminic acid, a sialic-acid-like sugar that is used to modify flagellin. Catalyzes the condensation of phosphoenolpyruvate with 2,4-diacetamido-2,4,6-trideoxy-beta-l-altropyranose, forming pseudaminic acid. The sequence is that of Pseudaminic acid synthase (pseI) from Campylobacter jejuni subsp. jejuni serotype O:2 (strain ATCC 700819 / NCTC 11168).